We begin with the raw amino-acid sequence, 618 residues long: Sodium-coupled monocarboxylate transporter 2 (618 aa).

Over 1-9 (MEVKNFAVW) the chain is Extracellular. The helical transmembrane segment at 10 to 30 (DYVVFAALFFISSGIGVFFAI) threads the bilayer. Topologically, residues 31-47 (KERKKATSREFLVGGRQ) are cytoplasmic. Residues 48–68 (MSFGPVGLSLTASFMSAVTVL) traverse the membrane as a helical segment. The Extracellular portion of the chain corresponds to 69-82 (GTPSEVYRFGASFL). A helical transmembrane segment spans residues 83-103 (VFFIAYLFVILLTSELFLPVF). Residues 104–128 (YRSGITSTYEYLQLRFNKPVRYAAT) lie on the Cytoplasmic side of the membrane. Residues 129 to 149 (VIYIVQTILYTGVVVYAPALA) traverse the membrane as a helical segment. Over 150–157 (LNQVTGFD) the chain is Extracellular. Residues 158-178 (LWGSVFATGIVCTFYCTLGGL) traverse the membrane as a helical segment. Residues 179-180 (KA) are Cytoplasmic-facing. Residues 181–201 (VVWTDAFQMVVMIVGFLTVLI) traverse the membrane as a helical segment. Topologically, residues 202–235 (QGSTHAGGFHNVLEQSTNGSRLHIFDFDVDPLRR) are extracellular. Residues 236-256 (HTFWTITVGGTFTWLGIYGVN) traverse the membrane as a helical segment. The Cytoplasmic portion of the chain corresponds to 257 to 275 (QSTIQRCISCKTEKHAKLA). The helical transmembrane segment at 276 to 296 (LYFNLLGLWIILVCAVFSGLI) threads the bilayer. The Extracellular segment spans residues 297–321 (MYSHFKDCDPWTSGIISAPDQLMPY). A helical membrane pass occupies residues 322 to 342 (FVMEIFATMPGLPGLFVACAF). At 343–385 (SGTLSTVASSINALATVTFEDFVKSCFPHLSDKLSTWISKGLC) the chain is on the cytoplasmic side. A helical membrane pass occupies residues 386–406 (LLFGVMCTSMAVAASVMGGVV). Residues 407–411 (QASLS) are Extracellular-facing. A helical membrane pass occupies residues 412 to 432 (IHGMCGGPMLGLFSLGIVFPF). Topologically, residues 433–437 (VNWKG) are cytoplasmic. The helical transmembrane segment at 438 to 458 (ALGGLLTGITLSFWVAIGAFI) threads the bilayer. Topologically, residues 459–504 (YPAPASKTWPLPLSTDQCIKSNVTATGPPVLSSRPGIADTWYSISY) are extracellular. N480 is a glycosylation site (N-linked (GlcNAc...) asparagine). A helical membrane pass occupies residues 505 to 525 (LYYSAVGCLGCIVAGVIISLI). The Cytoplasmic portion of the chain corresponds to 526–618 (TGRQRGEDIQ…NNMAFETTHF (93 aa)).

This sequence belongs to the sodium:solute symporter (SSF) (TC 2.A.21) family.

The protein localises to the apical cell membrane. It carries out the reaction (S)-lactate(out) + Na(+)(out) = (S)-lactate(in) + Na(+)(in). The catalysed reaction is nicotinate(out) + Na(+)(out) = nicotinate(in) + Na(+)(in). It catalyses the reaction pyruvate(out) + Na(+)(out) = pyruvate(in) + Na(+)(in). The enzyme catalyses propanoate(out) + Na(+)(out) = propanoate(in) + Na(+)(in). It carries out the reaction butanoate(out) + Na(+)(out) = butanoate(in) + Na(+)(in). The catalysed reaction is acetoacetate(out) + Na(+)(out) = acetoacetate(in) + Na(+)(in). With respect to regulation, cotransport of monocarboxylates and nicotinate strongly inhibited by ibuprofen, fenoprofen and ketoprofen. Functionally, acts as an electroneutral and low-affinity sodium (Na(+))-dependent sodium-coupled solute transporter. Catalyzes the transport across the plasma membrane of many monocarboxylates such as lactate, pyruvate, nicotinate, propionate, butyrate and beta-D-hydroxybutyrate. May be responsible for the first step of reabsorption of monocarboxylates from the lumen of the proximal tubule of the kidney and the small intestine. May play also a role in monocarboxylates transport in the retina. This Homo sapiens (Human) protein is Sodium-coupled monocarboxylate transporter 2.